We begin with the raw amino-acid sequence, 513 residues long: Palmitoyltransferase ZDHHC14 (513 aa).

At 1–59 the chain is on the cytoplasmic side; that stretch reads MHLGVEEPIRECQYNQICTHNSSPMDTPHIKKKKNKRKWQVFPGRNRFYCNGRIMMAKQ. Residues 60-80 traverse the membrane as a helical segment; that stretch reads TGVFYLTMVLILVTSGLFFAF. Over 81-88 the chain is Lumenal; sequence DCPFLASN. Residues 89 to 109 form a helical membrane-spanning segment; sequence LTPAIPAIGGVLFVFVMGMLL. At 110 to 207 the chain is on the cytoplasmic side; the sequence is RASFSDPGVL…GNCVGRRNYR (98 aa). The DHHC domain occupies 164–214; the sequence is KYCFTCKIFRPPRASHCSLCDNCVDRFDHHCPWVGNCVGRRNYRFFYLFIL. Catalysis depends on C194, which acts as the S-palmitoyl cysteine intermediate. Residues 208 to 228 form a helical membrane-spanning segment; sequence FFYLFILSLSFLTIFIFAFVI. At 229-266 the chain is on the lumenal side; the sequence is THVILNALRKALALSTAADFEAVQKDPTGLAFLVLSKT. Residues 267-287 traverse the membrane as a helical segment; sequence ALLDILEVVVCFFSVWSIVGL. The Cytoplasmic portion of the chain corresponds to 288 to 513; the sequence is SGFHTYLISS…VRGLVKLSSV (226 aa). The disordered stretch occupies residues 348-369; it reads FIQPDTPQPATQTNGTSACPPN. Over residues 355–369 the composition is skewed to polar residues; sequence QPATQTNGTSACPPN.

It belongs to the DHHC palmitoyltransferase family. ERF2/ZDHHC9 subfamily.

Its subcellular location is the endoplasmic reticulum membrane. The protein resides in the golgi apparatus membrane. It carries out the reaction L-cysteinyl-[protein] + hexadecanoyl-CoA = S-hexadecanoyl-L-cysteinyl-[protein] + CoA. Palmitoyltransferase that could catalyze the addition of palmitate onto various protein substrates. The polypeptide is Palmitoyltransferase ZDHHC14 (zdhhc14) (Danio rerio (Zebrafish)).